The following is a 46-amino-acid chain: uncharacterized protein (46 aa).

This is an uncharacterized protein from Escherichia coli (strain K12).